Here is an 872-residue protein sequence, read N- to C-terminus: Probable LRR receptor-like serine/threonine-protein kinase At1g51880 (872 aa).

A signal peptide spans 1–23; sequence MKSIHGFLLFLITAYVILESVQA. Residues 24-513 are Extracellular-facing; the sequence is QDQLGFISLD…GKSKKVPMIP (490 aa). Residues Asn-40, Asn-49, Asn-96, Asn-181, Asn-255, Asn-268, Asn-294, Asn-339, and Asn-401 are each glycosylated (N-linked (GlcNAc...) asparagine). LRR repeat units follow at residues 411 to 434, 435 to 457, and 459 to 482; these read RIIS…SKLT, QLIE…FADM, and LLKL…IQQR. Residues Asn-464 and Asn-472 are each glycosylated (N-linked (GlcNAc...) asparagine). A helical membrane pass occupies residues 514-534; sequence IVASVAGVFALLVILAIFFVV. The Cytoplasmic portion of the chain corresponds to 535 to 872; it reads RRKNGESNKG…SASEFSPGAR (338 aa). A Phosphothreonine modification is found at Thr-557. The 273-residue stretch at 566–838 folds into the Protein kinase domain; the sequence is NNFERVLGKG…HVVTELNECV (273 aa). ATP contacts are provided by residues 572–580 and Lys-593; that span reads LGKGGFGTV. A Phosphotyrosine modification is found at Tyr-638. The active-site Proton acceptor is the Asp-690. Ser-724 is modified (phosphoserine). Residues Thr-725 and Thr-730 each carry the phosphothreonine modification. The residue at position 738 (Tyr-738) is a Phosphotyrosine.

It belongs to the protein kinase superfamily. Ser/Thr protein kinase family.

The protein localises to the membrane. It catalyses the reaction L-seryl-[protein] + ATP = O-phospho-L-seryl-[protein] + ADP + H(+). The catalysed reaction is L-threonyl-[protein] + ATP = O-phospho-L-threonyl-[protein] + ADP + H(+). The protein is Probable LRR receptor-like serine/threonine-protein kinase At1g51880 of Arabidopsis thaliana (Mouse-ear cress).